We begin with the raw amino-acid sequence, 374 residues long: Probable tuliposide A-converting enzyme b6, amyloplastic (374 aa).

The transit peptide at 1 to 68 (MSVALFCGPP…TNSSLSPSPT (68 aa)) directs the protein to the amyloplast. The active-site Acyl-ester intermediate is the serine 226. Residues aspartate 316 and histidine 348 each act as charge relay system in the active site.

This sequence belongs to the AB hydrolase superfamily. Homodimer.

The protein resides in the plastid. Its subcellular location is the amyloplast. It carries out the reaction 6-tuliposide A = tulipalin A + D-glucose. In terms of biological role, lactone-forming carboxylesterases, specifically catalyzing intramolecular transesterification, but not hydrolysis. Involved in the biosynthesis of tulipalins, defensive chemicals that show antimicrobial activities against a broad range of strains of bacteria and fungi. Substrates are 6-tuliposide A &gt; 6-tuliposide B. The chain is Probable tuliposide A-converting enzyme b6, amyloplastic (TCEA-B6) from Tulipa gesneriana (Garden tulip).